We begin with the raw amino-acid sequence, 90 residues long: Delta-aiptatoxin-Adi1a (90 aa).

An N-terminal signal peptide occupies residues 1 to 21 (MKTAMLIAVLGFCAALCFVES). The propeptide occupies 22–44 (SHEEEREAAVYLTDLVSKAESAI). 3 disulfide bridges follow: Cys50-Cys86, Cys52-Cys77, and Cys70-Cys87.

It belongs to the sea anemone sodium channel inhibitory toxin family.

The protein localises to the secreted. It is found in the nematocyst. Functionally, cardioactive peptide that acts on voltage-gated sodium channels (hNav1.5/SCN5A) and voltage-gated potassium channels (Kv). The activity on sodium channels consists of inhibition on sodium current inactivation with no significant effect on current activation. This effect may be caused by direct interaction of the toxin with sodium channel site-3. The activity on potassium channels consists of a significant increase of the amplitude of the transient component of the potassium current, shifting the current threshold to more negative membrane potentials. These effects are concentration-dependent and reversible and may be due to a direct interaction between the toxin and the voltage-sensing domain of the channel. Physiologically, this toxin increases the amplitude of cardiomyocyte contraction and slows the late phase of the twitch relaxation velocity with no induction of spontaneous twitching. It increases action potential duration of cardiomyocytes with no effect on its threshold and on the cell resting potential. On insects, it shows neurotoxic activity to the blowfly larvae S.falculaty, causing an immediate spasm that progressed to body contraction and paralysis. This chain is Delta-aiptatoxin-Adi1a, found in Exaiptasia diaphana (Tropical sea anemone).